A 119-amino-acid chain; its full sequence is Cytochrome c55X (119 aa).

The first 20 residues, 1–20, serve as a signal peptide directing secretion; it reads MNAPPDFRRAASHALWLALA. Heme c is bound by residues Cys51, Cys54, and His55.

Post-translationally, binds 1 heme c group covalently per subunit.

It localises to the periplasm. In terms of biological role, monoheme c-type cytochrome. This chain is Cytochrome c55X (nirC), found in Pseudomonas aeruginosa (strain ATCC 15692 / DSM 22644 / CIP 104116 / JCM 14847 / LMG 12228 / 1C / PRS 101 / PAO1).